Consider the following 510-residue polypeptide: 2,3-bisphosphoglycerate-independent phosphoglycerate mutase (510 aa).

The Mn(2+) site is built by aspartate 12 and serine 62. The Phosphoserine intermediate role is filled by serine 62. Substrate-binding positions include histidine 123, 153–154 (RD), arginine 185, arginine 191, 260–263 (RPDR), and lysine 335. Aspartate 402, histidine 406, aspartate 443, histidine 444, and histidine 461 together coordinate Mn(2+).

The protein belongs to the BPG-independent phosphoglycerate mutase family. In terms of assembly, monomer. It depends on Mn(2+) as a cofactor.

It catalyses the reaction (2R)-2-phosphoglycerate = (2R)-3-phosphoglycerate. Its pathway is carbohydrate degradation; glycolysis; pyruvate from D-glyceraldehyde 3-phosphate: step 3/5. Catalyzes the interconversion of 2-phosphoglycerate and 3-phosphoglycerate. This chain is 2,3-bisphosphoglycerate-independent phosphoglycerate mutase, found in Listeria monocytogenes serotype 4b (strain F2365).